The primary structure comprises 575 residues: Delta-1-pyrroline-5-carboxylate dehydrogenase, mitochondrial (575 aa).

297–302 (GKIQSG) lines the NAD(+) pocket. Glu317 serves as the catalytic Proton acceptor. Cys351 functions as the Nucleophile in the catalytic mechanism.

It belongs to the aldehyde dehydrogenase family.

The protein resides in the mitochondrion inner membrane. It catalyses the reaction L-glutamate 5-semialdehyde + NAD(+) + H2O = L-glutamate + NADH + 2 H(+). It functions in the pathway amino-acid degradation; L-proline degradation into L-glutamate; L-glutamate from L-proline: step 2/2. This is Delta-1-pyrroline-5-carboxylate dehydrogenase, mitochondrial (PUT2) from Saccharomyces cerevisiae (strain ATCC 204508 / S288c) (Baker's yeast).